The sequence spans 276 residues: Inositol-1-monophosphatase ImpA (276 aa).

Residues E74, D90, I92, and D93 each contribute to the Mg(2+) site. E74 lines the substrate pocket. Substrate-binding positions include 92–95, R192, and D221; that span reads IDGT. D221 provides a ligand contact to Mg(2+).

It belongs to the inositol monophosphatase superfamily. Requires Mg(2+) as cofactor.

It catalyses the reaction a myo-inositol phosphate + H2O = myo-inositol + phosphate. It functions in the pathway polyol metabolism; myo-inositol biosynthesis; myo-inositol from D-glucose 6-phosphate: step 2/2. In terms of biological role, catalyzes the dephosphorylation of inositol 1-phosphate (I-1-P) to yield free myo-inositol, a key metabolite in mycobacteria. The sequence is that of Inositol-1-monophosphatase ImpA (impA) from Mycolicibacterium smegmatis (strain ATCC 700084 / mc(2)155) (Mycobacterium smegmatis).